The sequence spans 1318 residues: Serine/threonine-protein kinase ppk18 (1318 aa).

Residues 431 to 485 (PSVSPEEVHDISQFNHRNDPPITAASVDSSNSFSVHRSSTNHSSTNSGSPNLSRR) form a disordered region. A compositionally biased stretch (low complexity) spans 462 to 479 (SFSVHRSSTNHSSTNSGS). Residues 566–934 (YEIIKPISKG…INEIKEHPFF (369 aa)) form the Protein kinase domain. ATP-binding positions include 572-580 (ISKGTFGTV) and K595. D690 (proton acceptor) is an active-site residue. In terms of domain architecture, AGC-kinase C-terminal spans 935 to 1044 (NGINWDDIFS…KNLSVLERAN (110 aa)). 3 disordered regions span residues 968–1022 (GAAE…FSEA), 1058–1078 (KLHI…DMPS), and 1091–1127 (SLMT…GPKS). Over residues 972–1000 (SNMSSSVNSGEEVSKDNNVSQERGSQFLR) the composition is skewed to polar residues. The segment covering 1091–1115 (SLMTNQGSNFSSTDSTPRKSINSSD) has biased composition (polar residues). Residues 1116 to 1127 (VESRSKTDGPKS) are compositionally biased toward basic and acidic residues. The Response regulatory domain occupies 1200–1316 (KALICVSKLN…LLRGYIARLC (117 aa)).

The protein belongs to the protein kinase superfamily. Ser/Thr protein kinase family.

The protein localises to the cytoplasm. The catalysed reaction is L-seryl-[protein] + ATP = O-phospho-L-seryl-[protein] + ADP + H(+). It carries out the reaction L-threonyl-[protein] + ATP = O-phospho-L-threonyl-[protein] + ADP + H(+). The protein is Serine/threonine-protein kinase ppk18 (ppk18) of Schizosaccharomyces pombe (strain 972 / ATCC 24843) (Fission yeast).